The following is a 119-amino-acid chain: Large ribosomal subunit protein uL18 (119 aa).

This sequence belongs to the universal ribosomal protein uL18 family. As to quaternary structure, part of the 50S ribosomal subunit; part of the 5S rRNA/L5/L18/L25 subcomplex. Contacts the 5S and 23S rRNAs.

In terms of biological role, this is one of the proteins that bind and probably mediate the attachment of the 5S RNA into the large ribosomal subunit, where it forms part of the central protuberance. The chain is Large ribosomal subunit protein uL18 from Xylella fastidiosa (strain M23).